A 257-amino-acid polypeptide reads, in one-letter code: MFVDYSGLERYTDINASFGKLVNTYCCFQRCEAISEQLEILKSLVPKCHDIVALTDEDFASGRTAGLTQKLFAMAMTLHQITDCIDLLQKCNTIIPIEIANPASFESGAATAPLRQSYARLLDDWSHYMGPSTVKHTGCTNRPKWRFPWQQSRTIIIPMLFIGETAMSTRDLRSVLHDCEIRHASEMPLQLLWTSSPELVYATPHVDDYDIWSRYGSDYNMQIEDEDEASKGRQRKCVVQLEALLGALPTTDPLFQW.

The protein to yeast YKR015c.

This is an uncharacterized protein from Saccharomyces cerevisiae (strain ATCC 204508 / S288c) (Baker's yeast).